Consider the following 200-residue polypeptide: MTSTNKTLTQAILNFSKSYSQQHVEQFGHLPTVEHDEQWPSPCDLGSHDTSHHYWQAVAMESVQLADNKEEALSFENVESALNIELHPDIKIYFTTIFSGDIEAQSDDGELSLLFAWNKDDFERLQENIIGHILMKQKLKQVETVFFAVTDEEDMIISVDNSSGEVWVEQVGCKPHKKLSDSLAEFISQLTHKNVVSEKS.

This sequence belongs to the Syd family.

The protein localises to the cell inner membrane. Its function is as follows. Interacts with the SecY protein in vivo. May bind preferentially to an uncomplexed state of SecY, thus functioning either as a chelating agent for excess SecY in the cell or as a regulatory factor that negatively controls the translocase function. The polypeptide is Protein Syd (Colwellia psychrerythraea (strain 34H / ATCC BAA-681) (Vibrio psychroerythus)).